The following is a 393-amino-acid chain: S-adenosylmethionine synthase (393 aa).

Glutamate 9 is a Mg(2+) binding site. Histidine 15 provides a ligand contact to ATP. Glutamate 43 provides a ligand contact to K(+). Residues glutamate 56 and glutamine 99 each contribute to the L-methionine site. ATP is bound by residues 167 to 169, 235 to 238, aspartate 246, 252 to 253, alanine 269, lysine 273, and lysine 277; these read DGK, SGRF, and RK. Aspartate 246 serves as a coordination point for L-methionine. Lysine 277 is an L-methionine binding site.

It belongs to the AdoMet synthase family. In terms of assembly, homotetramer. Mn(2+) serves as cofactor. It depends on Mg(2+) as a cofactor. Co(2+) is required as a cofactor. Requires K(+) as cofactor.

It is found in the cytoplasm. The catalysed reaction is L-methionine + ATP + H2O = S-adenosyl-L-methionine + phosphate + diphosphate. Its pathway is amino-acid biosynthesis; S-adenosyl-L-methionine biosynthesis; S-adenosyl-L-methionine from L-methionine: step 1/1. Functionally, catalyzes the formation of S-adenosylmethionine from methionine and ATP. The reaction comprises two steps that are both catalyzed by the same enzyme: formation of S-adenosylmethionine (AdoMet) and triphosphate, and subsequent hydrolysis of the triphosphate. The sequence is that of S-adenosylmethionine synthase (SAMS) from Gossypium hirsutum (Upland cotton).